We begin with the raw amino-acid sequence, 800 residues long: Phenylalanine--tRNA ligase beta subunit (800 aa).

The region spanning 39 to 154 (TKDIKNLVVG…ESQVPGTDAL (116 aa)) is the tRNA-binding domain. One can recognise a B5 domain in the interval 408–483 (AFITPIDITA…RIYGYDDIPS (76 aa)). D461, D467, E470, and E471 together coordinate Mg(2+). An FDX-ACB domain is found at 708 to 800 (PRFPGMSRDI…ALIEQGAVIR (93 aa)).

It belongs to the phenylalanyl-tRNA synthetase beta subunit family. Type 1 subfamily. As to quaternary structure, tetramer of two alpha and two beta subunits. It depends on Mg(2+) as a cofactor.

Its subcellular location is the cytoplasm. The catalysed reaction is tRNA(Phe) + L-phenylalanine + ATP = L-phenylalanyl-tRNA(Phe) + AMP + diphosphate + H(+). This is Phenylalanine--tRNA ligase beta subunit from Staphylococcus aureus (strain Mu50 / ATCC 700699).